The primary structure comprises 651 residues: J domain-containing protein required for chloroplast accumulation response 1 (651 aa).

Positions 1–17 (MQTLPSSETVLLGSNSA) are enriched in polar residues. Disordered regions lie at residues 1 to 56 (MQTL…TRHS), 114 to 138 (GSRI…QFSL), 156 to 176 (LNKN…SKAD), 250 to 291 (KLGK…TDLK), and 308 to 526 (KPLD…IDEP). Ser-56 is subject to Phosphoserine. A compositionally biased stretch (low complexity) spans 126–137 (SSSGTSSPSQFS). Composition is skewed to basic and acidic residues over residues 250-259 (KLGKNEEGDG), 281-291 (TKEEKTETDLK), 337-357 (IFHE…EVRK), 405-416 (VGKDGVKGKVSD), 441-456 (RAKE…DGSN), and 488-497 (QKKDSDRESM). Residues 532–562 (DVEDITQDENKMEEANKDAEEIKNIDAKIRK) adopt a coiled-coil conformation. The region spanning 586 to 651 (SGWKPVPLMD…WDHFNTLGPV (66 aa)) is the J domain.

Expressed in leaves and stems, but not in roots.

It is found in the cytoplasm. Its function is as follows. Required for chloroplast photorelocation movement; chloroplast accumulation upon low blue light and for chloroplast movement to the bottom of cells in darkness, by modulating chloroplast actin (Cp-actin) filaments distribution, appearance and disappearance. May mediate a slight resistance to aluminum in root hair cells. This chain is J domain-containing protein required for chloroplast accumulation response 1 (JAC1), found in Arabidopsis thaliana (Mouse-ear cress).